Reading from the N-terminus, the 306-residue chain is Glutaminase (306 aa).

Positions 62, 114, 159, 166, 190, 242, and 260 each coordinate substrate.

This sequence belongs to the glutaminase family. In terms of assembly, homotetramer.

The catalysed reaction is L-glutamine + H2O = L-glutamate + NH4(+). The protein is Glutaminase of Clostridium tetani (strain Massachusetts / E88).